We begin with the raw amino-acid sequence, 864 residues long: Nitrate reductase [NADH] (864 aa).

Residue C139 participates in Mo-molybdopterin binding. Positions 497–572 (PRQYTMEEVA…LAQYYIGDLV (76 aa)) constitute a Cytochrome b5 heme-binding domain. Heme-binding residues include H532 and H555. Residues 606 to 718 (RQKVKLPLIE…KGPLGHFVYD (113 aa)) enclose the FAD-binding FR-type domain. FAD contacts are provided by residues 658 to 661 (RAYT), 675 to 679 (LIKVY), F680, F687, 692 to 694 (KMS), and T746.

The protein belongs to the nitrate reductase family. In terms of assembly, homodimer. Requires FAD as cofactor. Heme serves as cofactor. It depends on Mo-molybdopterin as a cofactor.

The enzyme catalyses nitrite + NAD(+) + H2O = nitrate + NADH + H(+). Its function is as follows. Nitrate reductase is a key enzyme involved in the first step of nitrate assimilation in plants, fungi and bacteria. The chain is Nitrate reductase [NADH] (NITA) from Volvox carteri (Green alga).